A 469-amino-acid polypeptide reads, in one-letter code: NADH-quinone oxidoreductase subunit N (469 aa).

14 helical membrane passes run 6–26 (IWII…LLLG), 37–57 (VGVA…PAAL), 61–81 (LGVA…LTAA), 96–116 (ISGE…AVVS), 121–141 (LLIL…LVAI), 156–176 (LLLG…LYAA), 197–217 (PIAL…ISLV), 234–254 (VVAF…LLLL), 263–283 (LHTP…LAAL), 291–311 (MLAY…LTGS), 315–335 (FAAV…AFGA), 362–382 (AGIL…AGFI), 397–419 (IPLA…RVVV), and 441–461 (IALS…SPLL).

The protein belongs to the complex I subunit 2 family. NDH-1 is composed of 14 different subunits. Subunits NuoA, H, J, K, L, M, N constitute the membrane sector of the complex.

The protein localises to the cell inner membrane. It catalyses the reaction a quinone + NADH + 5 H(+)(in) = a quinol + NAD(+) + 4 H(+)(out). NDH-1 shuttles electrons from NADH, via FMN and iron-sulfur (Fe-S) centers, to quinones in the respiratory chain. The immediate electron acceptor for the enzyme in this species is believed to be ubiquinone. Couples the redox reaction to proton translocation (for every two electrons transferred, four hydrogen ions are translocated across the cytoplasmic membrane), and thus conserves the redox energy in a proton gradient. This Geotalea uraniireducens (strain Rf4) (Geobacter uraniireducens) protein is NADH-quinone oxidoreductase subunit N.